The primary structure comprises 32 residues: Cytochrome b6-f complex subunit 7 (32 aa).

Residues 5–25 traverse the membrane as a helical segment; the sequence is FIASASISFIITLIGLTLGFA.

Belongs to the PetM family. The 4 large subunits of the cytochrome b6-f complex are cytochrome b6, subunit IV (17 kDa polypeptide, PetD), cytochrome f and the Rieske protein, while the 4 small subunits are PetG, PetL, PetM and PetN. The complex functions as a dimer.

The protein localises to the plastid. It is found in the chloroplast thylakoid membrane. In terms of biological role, component of the cytochrome b6-f complex, which mediates electron transfer between photosystem II (PSII) and photosystem I (PSI), cyclic electron flow around PSI, and state transitions. The protein is Cytochrome b6-f complex subunit 7 of Guillardia theta (Cryptophyte).